The chain runs to 303 residues: Glutamyl-Q tRNA(Asp) synthetase (303 aa).

Residues 9–13 (RFAPS) and E45 contribute to the L-glutamate site. Positions 12–22 (PSPSGSLHFGS) match the 'HIGH' region motif. Residues C101, C103, Y115, and C119 each coordinate Zn(2+). L-glutamate contacts are provided by Y172 and R190. The 'KMSKS' region motif lies at 228-232 (KLSKQ). Residue K231 coordinates ATP.

Belongs to the class-I aminoacyl-tRNA synthetase family. GluQ subfamily. It depends on Zn(2+) as a cofactor.

Catalyzes the tRNA-independent activation of glutamate in presence of ATP and the subsequent transfer of glutamate onto a tRNA(Asp). Glutamate is transferred on the 2-amino-5-(4,5-dihydroxy-2-cyclopenten-1-yl) moiety of the queuosine in the wobble position of the QUC anticodon. The chain is Glutamyl-Q tRNA(Asp) synthetase from Serratia proteamaculans (strain 568).